We begin with the raw amino-acid sequence, 211 residues long: Eukaryotic translation initiation factor 4E (211 aa).

This sequence belongs to the eukaryotic initiation factor 4E family. EIF4F is a multi-subunit complex, the composition of which varies with external and internal environmental conditions. It is composed of at least eIF4A, eIF4E and eIF4G. eIF4E is also known to interact with other partners.

Recognizes and binds the 7-methylguanosine-containing mRNA cap during an early step in the initiation of protein synthesis and facilitates ribosome binding by inducing the unwinding of the mRNAs secondary structures. The chain is Eukaryotic translation initiation factor 4E (TIF45) from Eremothecium gossypii (strain ATCC 10895 / CBS 109.51 / FGSC 9923 / NRRL Y-1056) (Yeast).